Here is a 78-residue protein sequence, read N- to C-terminus: ATP synthase subunit a (78 aa).

Residues 34-54 (LTNIGLYLTIGIFLILTYSLL) traverse the membrane as a helical segment.

This sequence belongs to the ATPase A chain family. As to quaternary structure, F-type ATPases have 2 components, CF(1) - the catalytic core - and CF(0) - the membrane proton channel. CF(1) has five subunits: alpha(3), beta(3), gamma(1), delta(1), epsilon(1). CF(0) has three main subunits: a, b and c.

Its subcellular location is the mitochondrion inner membrane. Functionally, mitochondrial membrane ATP synthase (F(1)F(0) ATP synthase or Complex V) produces ATP from ADP in the presence of a proton gradient across the membrane which is generated by electron transport complexes of the respiratory chain. F-type ATPases consist of two structural domains, F(1) - containing the extramembraneous catalytic core and F(0) - containing the membrane proton channel, linked together by a central stalk and a peripheral stalk. During catalysis, ATP synthesis in the catalytic domain of F(1) is coupled via a rotary mechanism of the central stalk subunits to proton translocation. Key component of the proton channel; it may play a direct role in the translocation of protons across the membrane. The sequence is that of ATP synthase subunit a (atp6) from Aspergillus amstelodami.